Reading from the N-terminus, the 169-residue chain is Protein GrpE (169 aa).

The interval 1–25 (MSEEKQNGQIQEETVENSENQNNEL) is disordered. Positions 7 to 23 (NGQIQEETVENSENQNN) are enriched in polar residues.

Belongs to the GrpE family. In terms of assembly, homodimer.

Its subcellular location is the cytoplasm. In terms of biological role, participates actively in the response to hyperosmotic and heat shock by preventing the aggregation of stress-denatured proteins, in association with DnaK and GrpE. It is the nucleotide exchange factor for DnaK and may function as a thermosensor. Unfolded proteins bind initially to DnaJ; upon interaction with the DnaJ-bound protein, DnaK hydrolyzes its bound ATP, resulting in the formation of a stable complex. GrpE releases ADP from DnaK; ATP binding to DnaK triggers the release of the substrate protein, thus completing the reaction cycle. Several rounds of ATP-dependent interactions between DnaJ, DnaK and GrpE are required for fully efficient folding. This is Protein GrpE from Campylobacter lari (strain RM2100 / D67 / ATCC BAA-1060).